Here is a 353-residue protein sequence, read N- to C-terminus: Phospho-furanose lactonase (353 aa).

The Zn(2+) site is built by H24, H26, K153, H186, and H214. Residue K153 is modified to N6-carboxylysine. 244–245 (KY) contacts substrate. D272 lines the Zn(2+) pocket. 275-278 (RILY) provides a ligand contact to substrate.

The protein belongs to the metallo-dependent hydrolases superfamily. Phosphotriesterase family. Zn(2+) is required as a cofactor.

The enzyme catalyses a 1,4-lactone + H2O = a 4-hydroxyacid + H(+). It carries out the reaction D-xylono-1,4-lactone 5-phosphate + H2O = 5-phospho-D-xylonate + H(+). The catalysed reaction is L-arabino-1,4-lactone 5-phosphate + H2O = 5-phospho-L-arabinonate + H(+). Functionally, catalyzes the hydrolysis of D-xylono-1,4-lactone-5-phosphate and L-arabino-1,4-lactone-5-phosphate. Also able to hydrolyze carboxy 1,4-lactones. The chain is Phospho-furanose lactonase from Mycoplasmopsis synoviae (strain 53) (Mycoplasma synoviae).